The chain runs to 468 residues: 6-phospho-beta-galactosidase (468 aa).

D-galactose 6-phosphate is bound by residues Gln19, His116, Asn159, Glu160, and Asn297. Glu160 (proton donor) is an active-site residue. Catalysis depends on Glu375, which acts as the Nucleophile. The D-galactose 6-phosphate site is built by Ser428, Trp429, Lys435, and Tyr437.

This sequence belongs to the glycosyl hydrolase 1 family.

It catalyses the reaction a 6-phospho-beta-D-galactoside + H2O = D-galactose 6-phosphate + an alcohol. The protein operates within carbohydrate metabolism; lactose degradation; D-galactose 6-phosphate and beta-D-glucose from lactose 6-phosphate: step 1/1. The sequence is that of 6-phospho-beta-galactosidase from Streptococcus pyogenes serotype M5 (strain Manfredo).